A 434-amino-acid chain; its full sequence is ATP-sensitive inward rectifier potassium channel 14 (434 aa).

Residues 1 to 81 (MGLARALRRL…LSDLFTTCVD (81 aa)) lie on the Cytoplasmic side of the membrane. C79 is modified (S-nitrosocysteine). Residues 82 to 108 (VRWRWMCLLFSCSFLASWLLFGLTFWL) traverse the membrane as a helical segment. Residues 109-131 (IASLHGDLAAPPPPAPCFSQVAS) are Extracellular-facing. The segment at residues 132–148 (FLAAFLFALETQTSIGY) is an intramembrane region (helical; Pore-forming). Residues 145–150 (SIGYGV) carry the Selectivity filter motif. Residues 149-157 (GVRSVTEEC) lie on the Extracellular side of the membrane. A helical membrane pass occupies residues 158–185 (PAAVAAVVLQCIAGCVLDAFVVGAVMAK). Residues 186 to 434 (MAKPKKRNET…TPTLALTLPP (249 aa)) lie on the Cytoplasmic side of the membrane. Positions 398–434 (QEEDEEEDTKEGTSAETPDRAASPQALTPTLALTLPP) are disordered. The segment covering 407–416 (KEGTSAETPD) has biased composition (basic and acidic residues). The segment covering 418-434 (AASPQALTPTLALTLPP) has biased composition (low complexity).

It belongs to the inward rectifier-type potassium channel (TC 1.A.2.1) family. KCNJ14 subfamily. Expressed predominantly in motoneurons of cranial nerve motor nuclei within the general somatic and special visceral motor cell column.

The protein localises to the membrane. The enzyme catalyses K(+)(in) = K(+)(out). With respect to regulation, channel activity is regulated by variations of cytosolic pH; channels are activated by alkaline and inhibited by acidic pH values. Inhibited by Ba(2+) and Cs(+) in a voltage-dependent manner; sensitivity to those inhibitors is lower than in other Kir channels. In terms of biological role, inward rectifier potassium channels are characterized by a greater tendency to allow potassium to flow into the cell rather than out of it. Their voltage dependence is regulated by the concentration of extracellular potassium; as external potassium is raised, the voltage range of the channel opening shifts to more positive voltages. This Rattus norvegicus (Rat) protein is ATP-sensitive inward rectifier potassium channel 14 (Kcnj14).